Here is a 128-residue protein sequence, read N- to C-terminus: Calcitonin gene-related peptide 1 (128 aa).

The signal sequence occupies residues 1 to 25 (MGFQKFSPFLALSILVLLQAGSLHA). The propeptide occupies 26–80 (APFRSALESSPADPATLSEDEARLLLAALVQDYVQMKASELEQEQEREGSRIIAQ). Cysteine 84 and cysteine 89 are disulfide-bonded. At phenylalanine 119 the chain carries Phenylalanine amide. Positions 125-128 (DLQA) are excised as a propeptide.

It belongs to the calcitonin family. In terms of tissue distribution, expressed in spinal cord.

Its subcellular location is the secreted. Functionally, CGRP1/CALCA is a peptide hormone that induces vasodilation mediated by the CALCRL-RAMP1 receptor complex. Dilates a variety of vessels including the coronary, cerebral and systemic vasculature. Its abundance in the CNS also points toward a neurotransmitter or neuromodulator role. It also elevates platelet cAMP. CGRP1 can also bind and activate CALCR-RAMP1 (AMYR1) receptor complex. The protein is Calcitonin gene-related peptide 1 of Homo sapiens (Human).